The sequence spans 129 residues: MDINPLLYLQAFNNDATTFNTQGHILEQQSDSPYFDTFANAMQAYLDTKQGGNDEEGTIILMDDEDFNDSESLEDFLQMLNEEELNDGFSSDDEPEEHVILTEDNQGEPSETPQATFDITEFIKTEDED.

Residues 86–96 (NDGFSSDDEPE) are compositionally biased toward acidic residues. Positions 86–129 (NDGFSSDDEPEEHVILTEDNQGEPSETPQATFDITEFIKTEDED) are disordered. A compositionally biased stretch (polar residues) spans 103 to 117 (EDNQGEPSETPQATF).

This sequence belongs to the asfivirus D129L family.

This is an uncharacterized protein from African swine fever virus (isolate Tick/South Africa/Pretoriuskop Pr4/1996) (ASFV).